A 145-amino-acid chain; its full sequence is Large ribosomal subunit protein eL32 (145 aa).

This sequence belongs to the eukaryotic ribosomal protein eL32 family.

The polypeptide is Large ribosomal subunit protein eL32 (rpl32e) (Aeropyrum pernix (strain ATCC 700893 / DSM 11879 / JCM 9820 / NBRC 100138 / K1)).